The sequence spans 506 residues: Fe(3+)-transport system permease protein FbpB 2 (506 aa).

The next 12 membrane-spanning stretches (helical) occupy residues 9–29, 57–77, 90–110, 116–136, 174–194, 218–238, 275–295, 314–334, 350–370, 379–399, 428–448, and 480–500; these read LTLLIILIGLPLCLPFLYVIL, LLMVCVTIGAISLGTFCAFLL, VAMTLPLCIPAFVSGFTWISL, VFWGTIGIMTLSSFPLAYLPV, IGSSILLIALHMLVEFGAVSI, ALLSAVLMAICILIVFGEIFF, IFILSIGVPVIMLIYWLIVGT, FIISGLGALLTVMCALPLVWA, PYLLHAVPGLVIALSLVYFSI, TFFVIIIAYFMLYLPMAQTTL, LTLPAILPGVAAAFALVFLNL, and AAATPYALMLVLFSGIPVFLL. One can recognise an ABC transmembrane type-1 1 domain in the interval 52–233; sequence LSNTMLLMVC…LMAICILIVF (182 aa). The region spanning 310–500 is the ABC transmembrane type-1 2 domain; sequence FSNSFIISGL…LFSGIPVFLL (191 aa).

It belongs to the binding-protein-dependent transport system permease family. FbpB subfamily. The complex is composed of two ATP-binding proteins (FbpC), two transmembrane proteins (FbpB) and a solute-binding protein (FbpA).

It is found in the cell inner membrane. In terms of biological role, part of the ABC transporter complex FbpABC (TC 3.A.1.10.1) involved in Fe(3+) ions import. Probably responsible for the translocation of the substrate across the membrane. The polypeptide is Fe(3+)-transport system permease protein FbpB 2 (fbpB2) (Haemophilus influenzae (strain ATCC 51907 / DSM 11121 / KW20 / Rd)).